The sequence spans 879 residues: Alanine--tRNA ligase (879 aa).

Positions 566, 570, 668, and 672 each coordinate Zn(2+).

This sequence belongs to the class-II aminoacyl-tRNA synthetase family. Zn(2+) is required as a cofactor.

The protein localises to the cytoplasm. It catalyses the reaction tRNA(Ala) + L-alanine + ATP = L-alanyl-tRNA(Ala) + AMP + diphosphate. Its function is as follows. Catalyzes the attachment of alanine to tRNA(Ala) in a two-step reaction: alanine is first activated by ATP to form Ala-AMP and then transferred to the acceptor end of tRNA(Ala). Also edits incorrectly charged Ser-tRNA(Ala) and Gly-tRNA(Ala) via its editing domain. The chain is Alanine--tRNA ligase from Halalkalibacterium halodurans (strain ATCC BAA-125 / DSM 18197 / FERM 7344 / JCM 9153 / C-125) (Bacillus halodurans).